A 451-amino-acid chain; its full sequence is Trigger factor (451 aa).

In terms of domain architecture, PPIase FKBP-type spans 165–250; that stretch reads DDKLTIDFEG…LHQIQAREVL (86 aa).

This sequence belongs to the FKBP-type PPIase family. Tig subfamily.

It localises to the cytoplasm. The enzyme catalyses [protein]-peptidylproline (omega=180) = [protein]-peptidylproline (omega=0). In terms of biological role, involved in protein export. Acts as a chaperone by maintaining the newly synthesized protein in an open conformation. Functions as a peptidyl-prolyl cis-trans isomerase. This Helicobacter acinonychis (strain Sheeba) protein is Trigger factor.